The primary structure comprises 261 residues: Small ribosomal subunit protein uS2 (261 aa).

Residues 224-261 (GRQGEDDEAVQQEEVAEGVSKDSLEDLKKTVEEGSNEE) form a disordered region. Residues 228–239 (EDDEAVQQEEVA) show a composition bias toward acidic residues. Basic and acidic residues predominate over residues 242-255 (VSKDSLEDLKKTVE).

This sequence belongs to the universal ribosomal protein uS2 family.

The polypeptide is Small ribosomal subunit protein uS2 (rpsB) (Pediococcus acidilactici).